Reading from the N-terminus, the 463-residue chain is ATP synthase subunit beta (463 aa).

153-160 (GGAGVGKT) contributes to the ATP binding site.

It belongs to the ATPase alpha/beta chains family. F-type ATPases have 2 components, CF(1) - the catalytic core - and CF(0) - the membrane proton channel. CF(1) has five subunits: alpha(3), beta(3), gamma(1), delta(1), epsilon(1). CF(0) has three main subunits: a(1), b(2) and c(9-12). The alpha and beta chains form an alternating ring which encloses part of the gamma chain. CF(1) is attached to CF(0) by a central stalk formed by the gamma and epsilon chains, while a peripheral stalk is formed by the delta and b chains.

It is found in the cell inner membrane. The enzyme catalyses ATP + H2O + 4 H(+)(in) = ADP + phosphate + 5 H(+)(out). In terms of biological role, produces ATP from ADP in the presence of a proton gradient across the membrane. The catalytic sites are hosted primarily by the beta subunits. The sequence is that of ATP synthase subunit beta from Burkholderia cepacia (Pseudomonas cepacia).